A 254-amino-acid polypeptide reads, in one-letter code: Imidazole glycerol phosphate synthase subunit HisF (254 aa).

Catalysis depends on residues Asp12 and Asp131.

The protein belongs to the HisA/HisF family. As to quaternary structure, heterodimer of HisH and HisF.

It is found in the cytoplasm. The catalysed reaction is 5-[(5-phospho-1-deoxy-D-ribulos-1-ylimino)methylamino]-1-(5-phospho-beta-D-ribosyl)imidazole-4-carboxamide + L-glutamine = D-erythro-1-(imidazol-4-yl)glycerol 3-phosphate + 5-amino-1-(5-phospho-beta-D-ribosyl)imidazole-4-carboxamide + L-glutamate + H(+). It functions in the pathway amino-acid biosynthesis; L-histidine biosynthesis; L-histidine from 5-phospho-alpha-D-ribose 1-diphosphate: step 5/9. IGPS catalyzes the conversion of PRFAR and glutamine to IGP, AICAR and glutamate. The HisF subunit catalyzes the cyclization activity that produces IGP and AICAR from PRFAR using the ammonia provided by the HisH subunit. The protein is Imidazole glycerol phosphate synthase subunit HisF of Rhizorhabdus wittichii (strain DSM 6014 / CCUG 31198 / JCM 15750 / NBRC 105917 / EY 4224 / RW1) (Sphingomonas wittichii).